Here is a 462-residue protein sequence, read N- to C-terminus: 3-deoxy-D-manno-octulosonic acid transferase (462 aa).

The helical; Signal-anchor transmembrane segment at 2-22 threads the bilayer; sequence MLLYYILSFILLPVYFIIIFI. Residues 47-90 form the RPE1 insert domain; it reads SLLDLQMSVNQEGFKVDTEHKATSYVYIHRNASLMYKLSLERSY. Glutamate 104 (proton acceptor) is an active-site residue. Residues 308–309, 349–351, and 374–377 each bind CMP; these read PR, FGE, and NILE.

The protein belongs to the glycosyltransferase group 1 family.

The protein resides in the cell inner membrane. It carries out the reaction lipid IVA (E. coli) + CMP-3-deoxy-beta-D-manno-octulosonate = alpha-Kdo-(2-&gt;6)-lipid IVA (E. coli) + CMP + H(+). The protein operates within bacterial outer membrane biogenesis; LPS core biosynthesis. Its function is as follows. Involved in lipopolysaccharide (LPS) biosynthesis. Catalyzes the transfer of 3-deoxy-D-manno-octulosonate (Kdo) residue(s) from CMP-Kdo to lipid IV(A), the tetraacyldisaccharide-1,4'-bisphosphate precursor of lipid A. The protein is 3-deoxy-D-manno-octulosonic acid transferase (waaA) of Rickettsia typhi (strain ATCC VR-144 / Wilmington).